The following is a 690-amino-acid chain: DNA ligase (690 aa).

NAD(+) contacts are provided by residues 49–53 (DAEYD), 98–99 (SL), and Glu129. The active-site N6-AMP-lysine intermediate is Lys131. Residues Arg152, Glu191, Lys308, and Lys332 each coordinate NAD(+). Cys426, Cys429, Cys444, and Cys450 together coordinate Zn(2+). The 84-residue stretch at 607–690 (EDAARLEGLT…ALLREQGIDA (84 aa)) folds into the BRCT domain.

Belongs to the NAD-dependent DNA ligase family. LigA subfamily. Mg(2+) serves as cofactor. The cofactor is Mn(2+).

It carries out the reaction NAD(+) + (deoxyribonucleotide)n-3'-hydroxyl + 5'-phospho-(deoxyribonucleotide)m = (deoxyribonucleotide)n+m + AMP + beta-nicotinamide D-nucleotide.. DNA ligase that catalyzes the formation of phosphodiester linkages between 5'-phosphoryl and 3'-hydroxyl groups in double-stranded DNA using NAD as a coenzyme and as the energy source for the reaction. It is essential for DNA replication and repair of damaged DNA. The polypeptide is DNA ligase (Salinibacter ruber (strain DSM 13855 / M31)).